We begin with the raw amino-acid sequence, 616 residues long: Cytochrome c oxidase subunit 1 (616 aa).

The chain crosses the membrane as a helical span at residues 28-48; sequence HLYLISGGFFFLLGGLEALFI. His72 contacts Fe(II)-heme a. The next 6 helical transmembrane spans lie at 75-95, 102-122, 158-178, 198-218, 243-263, and 275-295; these read TMIFLAAMPLVFAFMNAVVPL, VAFPFLNALGFWMFFFGGLFL, GLQISGFGTIMGAINFLVTII, FVTSALILFAFPPLTVGLIFM, LFWVFGHPEVYILVLPAFGIF, and LFGYSSMVFATVLIAFLGFMV. Residues His249 and Tyr253 each coordinate Cu cation. Positions 249-253 form a cross-link, 1'-histidyl-3'-tyrosine (His-Tyr); it reads HPEVY. 2 residues coordinate Cu cation: His298 and His299. The next 7 helical transmembrane spans lie at 303–323, 349–369, 380–400, 420–440, 463–483, 553–573, and 577–597; these read VGMGPIANAIFAVATMTIAVP, AVAFIPSFVMGGVTGVMLASA, FVVAHFHYVIVGGVVFALLAG, ITFWLFFIGFHLTFFIQHFLG, ISTIGAFFIAAATVILLINIV, SSFLPFVIAFGLFVAAFGFTY, and AGWGLPVAILGLLITLGSMFL. Residue His384 participates in Fe(II)-heme o binding. His384 provides a ligand contact to heme a3. A Fe(II)-heme a-binding site is contributed by His386.

Belongs to the heme-copper respiratory oxidase family. The cofactor is Cu(2+). It depends on heme as a cofactor.

It is found in the cell membrane. The enzyme catalyses 4 Fe(II)-[cytochrome c] + O2 + 8 H(+)(in) = 4 Fe(III)-[cytochrome c] + 2 H2O + 4 H(+)(out). The protein operates within energy metabolism; oxidative phosphorylation. Cytochrome c oxidase is the component of the respiratory chain that catalyzes the reduction of oxygen to water. Subunits 1-3 form the functional core of the enzyme complex. Co I is the catalytic subunit of the enzyme. Electrons originating in cytochrome c are transferred via the copper A center of subunit 2 and heme a of subunit 1 to the bimetallic center formed by heme a3 and copper B. This cytochrome c oxidase shows proton pump activity across the membrane in addition to the electron transfer. This chain is Cytochrome c oxidase subunit 1 (ctaD), found in Bacillus sp. (strain PS3).